Consider the following 295-residue polypeptide: Ethanolamine ammonia-lyase small subunit (295 aa).

3 residues coordinate adenosylcob(III)alamin: Val207, Glu228, and Cys258.

Belongs to the EutC family. As to quaternary structure, the basic unit is a heterodimer which dimerizes to form tetramers. The heterotetramers trimerize; 6 large subunits form a core ring with 6 small subunits projecting outwards. Adenosylcob(III)alamin serves as cofactor.

It is found in the bacterial microcompartment. The catalysed reaction is ethanolamine = acetaldehyde + NH4(+). It participates in amine and polyamine degradation; ethanolamine degradation. In terms of biological role, catalyzes the deamination of various vicinal amino-alcohols to oxo compounds. Allows this organism to utilize ethanolamine as the sole source of nitrogen and carbon in the presence of external vitamin B12. The polypeptide is Ethanolamine ammonia-lyase small subunit (Escherichia coli (strain UTI89 / UPEC)).